A 451-amino-acid chain; its full sequence is tRNA-2-methylthio-N(6)-dimethylallyladenosine synthase (451 aa).

One can recognise an MTTase N-terminal domain in the interval 6-122 (RRYHIITFGC…LDQLLEQVWA (117 aa)). 6 residues coordinate [4Fe-4S] cluster: Cys15, Cys51, Cys85, Cys157, Cys161, and Cys164. Positions 143-384 (RESTVSAWVN…STQAMERSQR (242 aa)) constitute a Radical SAM core domain. In terms of domain architecture, TRAM spans 383 to 447 (QRYLGRVEEV…AFSLTGEALS (65 aa)).

It belongs to the methylthiotransferase family. MiaB subfamily. In terms of assembly, monomer. It depends on [4Fe-4S] cluster as a cofactor.

It localises to the cytoplasm. It carries out the reaction N(6)-dimethylallyladenosine(37) in tRNA + (sulfur carrier)-SH + AH2 + 2 S-adenosyl-L-methionine = 2-methylsulfanyl-N(6)-dimethylallyladenosine(37) in tRNA + (sulfur carrier)-H + 5'-deoxyadenosine + L-methionine + A + S-adenosyl-L-homocysteine + 2 H(+). In terms of biological role, catalyzes the methylthiolation of N6-(dimethylallyl)adenosine (i(6)A), leading to the formation of 2-methylthio-N6-(dimethylallyl)adenosine (ms(2)i(6)A) at position 37 in tRNAs that read codons beginning with uridine. The protein is tRNA-2-methylthio-N(6)-dimethylallyladenosine synthase of Synechocystis sp. (strain ATCC 27184 / PCC 6803 / Kazusa).